The following is a 239-amino-acid chain: Uridylate kinase (239 aa).

An ATP-binding site is contributed by 12–15 (KLSG). Gly-53 provides a ligand contact to UMP. Gly-54 and Arg-58 together coordinate ATP. UMP-binding positions include Asp-73 and 135 to 142 (TGSPCFTT). Residues Thr-162, Tyr-168, and Asp-171 each coordinate ATP.

Belongs to the UMP kinase family. In terms of assembly, homohexamer.

It localises to the cytoplasm. It catalyses the reaction UMP + ATP = UDP + ADP. It participates in pyrimidine metabolism; CTP biosynthesis via de novo pathway; UDP from UMP (UMPK route): step 1/1. Inhibited by UTP. Its function is as follows. Catalyzes the reversible phosphorylation of UMP to UDP. The chain is Uridylate kinase from Ruthia magnifica subsp. Calyptogena magnifica.